We begin with the raw amino-acid sequence, 400 residues long: Argininosuccinate synthase (400 aa).

8 to 16 is a binding site for ATP; sequence AYSGGLDTS. Position 87 (Tyr87) interacts with L-citrulline. Gly117 serves as a coordination point for ATP. L-aspartate is bound by residues Thr119, Asn123, and Asp124. Residue Asn123 participates in L-citrulline binding. 4 residues coordinate L-citrulline: Arg127, Ser175, Glu260, and Tyr272.

This sequence belongs to the argininosuccinate synthase family. Type 1 subfamily. In terms of assembly, homotetramer.

It is found in the cytoplasm. It catalyses the reaction L-citrulline + L-aspartate + ATP = 2-(N(omega)-L-arginino)succinate + AMP + diphosphate + H(+). Its pathway is amino-acid biosynthesis; L-arginine biosynthesis; L-arginine from L-ornithine and carbamoyl phosphate: step 2/3. In Nocardia farcinica (strain IFM 10152), this protein is Argininosuccinate synthase.